The sequence spans 310 residues: MAAGLSTAVTFKPLHRSFSSSSTDFRLRLPKSLSGFSPSLRFKRFSVCYVVEERRQNSPIENDERPESTSSTNAIDAEYLALRLAEKLERKKSERSTYLIAAMLSSFGITSMAVMAVYYRFSWQMEGGEISMLEMFGTFALSVGAAVGMEFWARWAHRALWHASLWNMHESHHKPREGPFELNDVFAIVNAGPAIGLLSYGFFNKGLVPGLCFGAGLGITVFGIAYMFVHDGLVHKRFPVGPIADVPYLRKVAAAHQLHHTDKFNGVPYGLFLGPKELEEVGGNEELDKEISRRIKSYKKASGSGSSSSS.

The N-terminal 51 residues, 1 to 51 (MAAGLSTAVTFKPLHRSFSSSSTDFRLRLPKSLSGFSPSLRFKRFSVCYVV), are a transit peptide targeting the chloroplast. The next 2 helical transmembrane spans lie at 98–118 (YLIA…MAVY) and 132–152 (MLEM…MEFW). In terms of domain architecture, Fatty acid hydroxylase spans 145–272 (AAVGMEFWAR…KFNGVPYGLF (128 aa)). The Histidine box-1 motif lies at 157-162 (HRALWH). The short motif at 169 to 173 (HESHH) is the Histidine box-2 element. Helical transmembrane passes span 183 to 203 (NDVF…YGFF) and 208 to 228 (VPGL…AYMF). The short motif at 230–235 (HDGLVH) is the Histidine box-3 element. The short motif at 256–260 (HQLHH) is the Histidine box-4 element.

This sequence belongs to the sterol desaturase family. As to quaternary structure, homodimer. In terms of tissue distribution, expressed in leaves, flowers, stems, roots and siliques.

It is found in the plastid. The protein resides in the chloroplast membrane. The catalysed reaction is all-trans-beta-carotene + 4 reduced [2Fe-2S]-[ferredoxin] + 2 O2 + 4 H(+) = all-trans-zeaxanthin + 4 oxidized [2Fe-2S]-[ferredoxin] + 2 H2O. Nonheme diiron monooxygenase involved in the biosynthesis of xanthophylls. Specific for beta-ring hydroxylations of beta-carotene. Also has a low activity toward the beta- and epsilon-rings of alpha-carotene. No activity with acyclic carotenoids such as lycopene and neurosporene. Uses ferredoxin as an electron donor. This Arabidopsis thaliana (Mouse-ear cress) protein is Beta-carotene 3-hydroxylase 1, chloroplastic (BETA-OHASE 1).